The chain runs to 192 residues: Adenylate kinase (192 aa).

12 to 17 (GSGKTT) is an ATP binding site. The tract at residues 33-62 (STGDLLRAEVAKDSELGKKIDKIISGGNLV) is NMP. AMP is bound by residues Thr-34, Arg-39, 60–62 (NLV), 87–90 (GYPR), and Gln-94. The interval 129–135 (GRARGAD) is LID. An ATP-binding site is contributed by Arg-130. Residues Arg-132 and Arg-144 each coordinate AMP. Residue Arg-172 coordinates ATP.

The protein belongs to the adenylate kinase family. Monomer.

It is found in the cytoplasm. It carries out the reaction AMP + ATP = 2 ADP. The protein operates within purine metabolism; AMP biosynthesis via salvage pathway; AMP from ADP: step 1/1. Functionally, catalyzes the reversible transfer of the terminal phosphate group between ATP and AMP. Plays an important role in cellular energy homeostasis and in adenine nucleotide metabolism. The polypeptide is Adenylate kinase (Campylobacter hominis (strain ATCC BAA-381 / DSM 21671 / CCUG 45161 / LMG 19568 / NCTC 13146 / CH001A)).